The sequence spans 176 residues: Variant surface antigen A (176 aa).

The first 29 residues, 1–29 (MKKSIFSKKLLVSFGSLVALAAIPLIAIS), serve as a signal peptide directing secretion. A lipid anchor (N-palmitoyl cysteine) is attached at Cys30. Cys30 carries S-diacylglycerol cysteine lipidation. The segment at 33-176 (TDNNSSQSQQ…TKTENTQHTS (144 aa)) is disordered. The span at 35-121 (NNSSQSQQPG…GSNSESGMNS (87 aa)) shows a compositional bias: low complexity. Residues 123-135 (KTENTQQSEAPGT) form repeat 1. Positions 123–176 (KTENTQQSEAPGTNTGNKTTSESNSESGMNSEKTENTQQSEAPGTKTENTQHTS) are 2.5 X 13 AA repeats. Polar residues predominate over residues 126-142 (NTQQSEAPGTNTGNKTT). Over residues 143–153 (SESNSESGMNS) the composition is skewed to low complexity. Repeat unit 2 spans residues 155-167 (KTENTQQSEAPGT). Polar residues predominate over residues 158 to 176 (NTQQSEAPGTKTENTQHTS). Residues 168–176 (KTENTQHTS) form a 3; truncated repeat.

The protein resides in the cell membrane. Responsible for the antigenic diversity for host adaptation. This is Variant surface antigen A (vlpA) from Mesomycoplasma hyorhinis (Mycoplasma hyorhinis).